A 118-amino-acid chain; its full sequence is UPF0342 protein BAMEG_3696 (118 aa).

This sequence belongs to the UPF0342 family.

The protein is UPF0342 protein BAMEG_3696 of Bacillus anthracis (strain CDC 684 / NRRL 3495).